A 194-amino-acid polypeptide reads, in one-letter code: Ferredoxin, apicoplast (194 aa).

The transit peptide at 1–19 (MNIVILLLILTFSIKHSNT) directs the protein to the apicoplast. The 2Fe-2S ferredoxin-type domain occupies 99-189 (YNITLRTNDG…DCVIETHKED (91 aa)). 4 residues coordinate [2Fe-2S] cluster: Cys-135, Cys-140, Cys-143, and Cys-173.

Belongs to the 2Fe2S plant-type ferredoxin family. The cofactor is [2Fe-2S] cluster.

It is found in the plastid. The protein resides in the apicoplast. In terms of biological role, ferredoxins are iron-sulfur proteins that transfer electrons in a wide variety of metabolic reactions. By transferring electrons to 4-hydroxy-3-methylbut-2-enyl diphosphate reductase LytB/IspH, plays a role in the terminal step of the DOXP/MEP pathway for isoprenoid precursor biosynthesis. In Plasmodium falciparum (isolate 3D7), this protein is Ferredoxin, apicoplast.